The primary structure comprises 457 residues: uncharacterized protein (457 aa).

Residues 1–18 (MKLLISLLWSIFFSIVYS) form the signal peptide. Topologically, residues 19–173 (EKTLLNFKHY…GGLPASQFPR (155 aa)) are lumenal. A helical membrane pass occupies residues 174 to 194 (MPISGGITIAYSVILALWMFF). The Cytoplasmic segment spans residues 195 to 207 (RFQYKHSIVTVQK). Residues 208–228 (AIMFLLIFSCAQQAVTSIVLD) form a helical membrane-spanning segment. The Lumenal segment spans residues 229-243 (TENLRNRGNFTWLGE). A helical transmembrane segment spans residues 244–264 (TLVSILFACQLVLDLALLLIL). Over 265-284 (SWGYTRYSTNMRDRLFTEAK) the chain is Cytoplasmic. Residues 285 to 305 (IPLIICFFALFVVRFFAITIQ) traverse the membrane as a helical segment. Residues 306-314 (SIHLGLWFC) lie on the Lumenal side of the membrane. Residues 315-335 (FFFLTACISALYILFGAFVAL) form a helical membrane-spanning segment. At 336 to 358 (PSTLRALVEQRYYTLHSIYKIFR) the chain is on the cytoplasmic side. Residues 359-379 (IMVLCGVVTIFSFSLVALIFC) form a helical membrane-spanning segment. The Lumenal portion of the chain corresponds to 380-457 (SNTNNNSTNK…EEDIRADKSK (78 aa)).

It belongs to the LU7TM family.

The protein localises to the endoplasmic reticulum membrane. This is an uncharacterized protein from Schizosaccharomyces pombe (strain 972 / ATCC 24843) (Fission yeast).